Consider the following 1906-residue polypeptide: Serine protease/ABC transporter B family protein tagB (1906 aa).

The N-terminal stretch at 1–31 (MKFQFSSPSKIFLFSSVILILIFIGIKFELL) is a signal peptide. Positions 96–134 (INNNNNNNNKLNNNNNNNNNNNNNNNNNNNNNNNNNNNN) are disordered. The region spanning 356–763 (PTVIFGTKDK…ASSTNPSNAI (408 aa)) is the Peptidase S8 domain. Active-site charge relay system residues include D387 and H432. N-linked (GlcNAc...) asparagine glycans are attached at residues N594, N621, and N672. S695 functions as the Charge relay system in the catalytic mechanism. N-linked (GlcNAc...) asparagine glycans are attached at residues N747 and N823. 3 consecutive transmembrane segments (helical) span residues 1011 to 1031 (YIII…LMWI), 1076 to 1096 (FIIE…ASIL), and 1121 to 1141 (FIII…GSWI). Residues 1080–1363 (LTIATACSLV…LFGVYVSYIQ (284 aa)) form the ABC transmembrane type-1 domain. N1172 is a glycosylation site (N-linked (GlcNAc...) asparagine). Transmembrane regions (helical) follow at residues 1210 to 1230 (LVFI…AVPI), 1309 to 1329 (WLLI…LVIQ), and 1332 to 1352 (FTVG…DASS). Positions 1385–1455 (LEEEEADRLA…NNNNNIGNLD (71 aa)) are disordered. Residues 1396–1405 (LSGGGGGGGD) are compositionally biased toward gly residues. Residues 1407–1420 (GDDKKDKQNIENGK) are compositionally biased toward basic and acidic residues. The region spanning 1518 to 1756 (IEFKNVSFRY…KGKYYRMFSE (239 aa)) is the ABC transporter domain. N-linked (GlcNAc...) asparagine glycosylation is present at N1522. 1553–1560 (GPSGSGKS) lines the ATP pocket. N1658 is a glycosylation site (N-linked (GlcNAc...) asparagine). Residues 1757-1906 (DKDDTPLQNN…QMDEENDEER (150 aa)) form a disordered region. Composition is skewed to low complexity over residues 1765 to 1779 (NNNN…NNNN) and 1814 to 1871 (EQQE…DYDQ). Residues 1872–1886 (VPPPPPLPSESPSPP) are compositionally biased toward pro residues.

This sequence in the C-terminal section; belongs to the ABC transporter superfamily. ABCB family. Multidrug resistance exporter (TC 3.A.1.201) subfamily. It in the N-terminal section; belongs to the peptidase S8 family.

It is found in the membrane. In terms of biological role, intercellular communication via tagB may mediate integration of cellular differentiation with morphogenesis. This is Serine protease/ABC transporter B family protein tagB (tagB) from Dictyostelium discoideum (Social amoeba).